The sequence spans 2158 residues: Non-reducing polyketide synthase Preu8 (2158 aa).

Residues 4–241 are N-terminal acylcarrier protein transacylase domain (SAT); it reads LVLGDQVADH…TPIPVFAPYH (238 aa). The Ketosynthase family 3 (KS3) domain maps to 369–801; it reads NDKIAIVGMS…GGNTAIILED (433 aa). Active-site for beta-ketoacyl synthase activity residues include Cys-541, His-676, and His-719. A malonyl-CoA:ACP transacylase (MAT) domain region spans residues 900-1215; that stretch reads FTFTGQGSQY…ANSVSTLFLA (316 aa). Catalysis depends on Ser-989, which acts as the For acyl/malonyl transferase activity. Residues 1285-1603 are product template (PT) domain; the sequence is SCQRIVREEL…RRVLNIMMPP (319 aa). The N-terminal hotdog fold stretch occupies residues 1287-1423; sequence QRIVREELHA…GTVKYEDVSQ (137 aa). Residues 1287 to 1598 form the PKS/mFAS DH domain; it reads QRIVREELHA…FQNIARRVLN (312 aa). His-1319 serves as the catalytic Proton acceptor; for dehydratase activity. The segment at 1451 to 1598 is C-terminal hotdog fold; the sequence is AHKVLRGMAY…FQNIARRVLN (148 aa). Asp-1511 acts as the Proton donor; for dehydratase activity in catalysis. Positions 1619-1639 are enriched in low complexity; sequence KKAASPTLAPAKAAKPAAKTS. Residues 1619 to 1654 are disordered; that stretch reads KKAASPTLAPAKAAKPAAKTSKPSKARAKPAADSTT. The Carrier 1 domain maps to 1651 to 1725; sequence DSTTSRVMKI…QMKKFFSQYD (75 aa). Ser-1685 carries the post-translational modification O-(pantetheine 4'-phosphoryl)serine. The segment at 1723–1779 is disordered; the sequence is QYDGAPIPDDGDDSDGTDEPSNFSTPSYGADNASTPPSSAPSVNGKSSPENHEVLES. A compositionally biased stretch (acidic residues) spans 1731 to 1740; that stretch reads DDGDDSDGTD. Over residues 1743–1770 the composition is skewed to polar residues; the sequence is SNFSTPSYGADNASTPPSSAPSVNGKSS. Positions 1779 to 1853 constitute a Carrier 2 domain; sequence STEVSLARKI…DIENELGMRP (75 aa). O-(pantetheine 4'-phosphoryl)serine is present on Ser-1813. A disordered region spans residues 1847-1879; it reads NELGMRPKPKPKAEAAPPKSSAKASPSANKQPQ. Low complexity predominate over residues 1860–1876; that stretch reads EAAPPKSSAKASPSANK. The thioesterase (TE) domain stretch occupies residues 1894-2144; sequence SQYPPANSVL…NHFTMMKGDH (251 aa).

Pantetheine 4'-phosphate is required as a cofactor.

In terms of biological role, non-reducing polyketide synthase; part of a gene cluster that mediates the biosynthesis of a yet unidentified natural product. The protein is Non-reducing polyketide synthase Preu8 of Preussia isomera (Coprophilous fungus).